Here is a 244-residue protein sequence, read N- to C-terminus: tRNA pseudouridine synthase A (244 aa).

Catalysis depends on Asp-52, which acts as the Nucleophile. A substrate-binding site is contributed by Tyr-110.

Belongs to the tRNA pseudouridine synthase TruA family. As to quaternary structure, homodimer.

The catalysed reaction is uridine(38/39/40) in tRNA = pseudouridine(38/39/40) in tRNA. Formation of pseudouridine at positions 38, 39 and 40 in the anticodon stem and loop of transfer RNAs. The sequence is that of tRNA pseudouridine synthase A from Clostridium botulinum (strain Eklund 17B / Type B).